The primary structure comprises 1676 residues: DNA-directed RNA polymerase subunit beta'-beta'' (1676 aa).

Residues 1–582 (MCDAIQIRLA…FLKTTPGRII (582 aa)) form a DNA-directed RNA polymerase subunit beta' region. Residues Cys64, Cys66, Cys79, and Cys82 each coordinate Zn(2+). Asp454, Asp456, and Asp458 together coordinate Mg(2+). The segment at 583 to 1676 (FYQQAAYHVG…IPAGTGAKYL (1094 aa)) is DNA-directed RNA polymerase subunit beta''. Residues Cys804, Cys859, Cys866, and Cys869 each coordinate Zn(2+).

In the N-terminal section; belongs to the RNA polymerase beta' chain family. RpoC1 subfamily. The protein in the C-terminal section; belongs to the RNA polymerase beta' chain family. RpoC2 subfamily. In terms of assembly, in plastids the minimal PEP RNA polymerase catalytic core is composed of four subunits: alpha, beta, beta', and beta''. When a (nuclear-encoded) sigma factor is associated with the core the holoenzyme is formed, which can initiate transcription. Beta' and beta'' are fused in this algae. Mg(2+) is required as a cofactor. Zn(2+) serves as cofactor.

The protein resides in the plastid. The protein localises to the chloroplast. It carries out the reaction RNA(n) + a ribonucleoside 5'-triphosphate = RNA(n+1) + diphosphate. In terms of biological role, DNA-dependent RNA polymerase catalyzes the transcription of DNA into RNA using the four ribonucleoside triphosphates as substrates. The chain is DNA-directed RNA polymerase subunit beta'-beta'' from Cyanidioschyzon merolae (strain NIES-3377 / 10D) (Unicellular red alga).